The sequence spans 398 residues: Dual-specificity RNA methyltransferase RlmN (398 aa).

The active-site Proton acceptor is the Glu119. The 240-residue stretch at 125–364 (EADRATLCVS…TIVRKTRGDD (240 aa)) folds into the Radical SAM core domain. An intrachain disulfide couples Cys132 to Cys369. [4Fe-4S] cluster contacts are provided by Cys139, Cys143, and Cys146. S-adenosyl-L-methionine-binding positions include 193 to 194 (GE), Ser225, 247 to 249 (SLH), and Asn326. Catalysis depends on Cys369, which acts as the S-methylcysteine intermediate.

Belongs to the radical SAM superfamily. RlmN family. The cofactor is [4Fe-4S] cluster.

It localises to the cytoplasm. It carries out the reaction adenosine(2503) in 23S rRNA + 2 reduced [2Fe-2S]-[ferredoxin] + 2 S-adenosyl-L-methionine = 2-methyladenosine(2503) in 23S rRNA + 5'-deoxyadenosine + L-methionine + 2 oxidized [2Fe-2S]-[ferredoxin] + S-adenosyl-L-homocysteine. The enzyme catalyses adenosine(37) in tRNA + 2 reduced [2Fe-2S]-[ferredoxin] + 2 S-adenosyl-L-methionine = 2-methyladenosine(37) in tRNA + 5'-deoxyadenosine + L-methionine + 2 oxidized [2Fe-2S]-[ferredoxin] + S-adenosyl-L-homocysteine. In terms of biological role, specifically methylates position 2 of adenine 2503 in 23S rRNA and position 2 of adenine 37 in tRNAs. m2A2503 modification seems to play a crucial role in the proofreading step occurring at the peptidyl transferase center and thus would serve to optimize ribosomal fidelity. The polypeptide is Dual-specificity RNA methyltransferase RlmN (Yersinia pseudotuberculosis serotype IB (strain PB1/+)).